A 482-amino-acid polypeptide reads, in one-letter code: ATP synthase subunit beta, chloroplastic (482 aa).

Position 168-175 (168-175) interacts with ATP; it reads GGAGVGKT.

The protein belongs to the ATPase alpha/beta chains family. In terms of assembly, F-type ATPases have 2 components, CF(1) - the catalytic core - and CF(0) - the membrane proton channel. CF(1) has five subunits: alpha(3), beta(3), gamma(1), delta(1), epsilon(1). CF(0) has four main subunits: a(1), b(1), b'(1) and c(9-12).

The protein localises to the plastid. It localises to the chloroplast thylakoid membrane. It catalyses the reaction ATP + H2O + 4 H(+)(in) = ADP + phosphate + 5 H(+)(out). Produces ATP from ADP in the presence of a proton gradient across the membrane. The catalytic sites are hosted primarily by the beta subunits. In Gnetum parvifolium (Small-leaved jointfir), this protein is ATP synthase subunit beta, chloroplastic.